Consider the following 90-residue polypeptide: DNA-directed RNA polymerase subunit omega (90 aa).

This sequence belongs to the RNA polymerase subunit omega family. In terms of assembly, the RNAP catalytic core consists of 2 alpha, 1 beta, 1 beta' and 1 omega subunit. When a sigma factor is associated with the core the holoenzyme is formed, which can initiate transcription.

The catalysed reaction is RNA(n) + a ribonucleoside 5'-triphosphate = RNA(n+1) + diphosphate. Functionally, promotes RNA polymerase assembly. Latches the N- and C-terminal regions of the beta' subunit thereby facilitating its interaction with the beta and alpha subunits. The chain is DNA-directed RNA polymerase subunit omega from Beutenbergia cavernae (strain ATCC BAA-8 / DSM 12333 / CCUG 43141 / JCM 11478 / NBRC 16432 / NCIMB 13614 / HKI 0122).